A 99-amino-acid chain; its full sequence is Malonate decarboxylase acyl carrier protein (99 aa).

Ser-25 is subject to O-(phosphoribosyl dephospho-coenzyme A)serine.

Post-translationally, covalently binds the prosthetic group of malonate decarboxylase.

It localises to the cytoplasm. In terms of biological role, subunit of malonate decarboxylase, it is an acyl carrier protein to which acetyl and malonyl thioester residues are bound via a 2'-(5''-phosphoribosyl)-3'-dephospho-CoA prosthetic group and turn over during the catalytic mechanism. This chain is Malonate decarboxylase acyl carrier protein (mdcC), found in Klebsiella pneumoniae.